The chain runs to 169 residues: Peptide deformylase (169 aa).

Residues cysteine 94 and histidine 136 each coordinate Fe cation. Glutamate 137 is an active-site residue. Position 140 (histidine 140) interacts with Fe cation.

It belongs to the polypeptide deformylase family. Requires Fe(2+) as cofactor.

It carries out the reaction N-terminal N-formyl-L-methionyl-[peptide] + H2O = N-terminal L-methionyl-[peptide] + formate. Its function is as follows. Removes the formyl group from the N-terminal Met of newly synthesized proteins. Requires at least a dipeptide for an efficient rate of reaction. N-terminal L-methionine is a prerequisite for activity but the enzyme has broad specificity at other positions. This chain is Peptide deformylase, found in Phenylobacterium zucineum (strain HLK1).